The primary structure comprises 474 residues: Aspartyl/glutamyl-tRNA(Asn/Gln) amidotransferase subunit B (474 aa).

This sequence belongs to the GatB/GatE family. GatB subfamily. As to quaternary structure, heterotrimer of A, B and C subunits.

The catalysed reaction is L-glutamyl-tRNA(Gln) + L-glutamine + ATP + H2O = L-glutaminyl-tRNA(Gln) + L-glutamate + ADP + phosphate + H(+). It catalyses the reaction L-aspartyl-tRNA(Asn) + L-glutamine + ATP + H2O = L-asparaginyl-tRNA(Asn) + L-glutamate + ADP + phosphate + 2 H(+). Functionally, allows the formation of correctly charged Asn-tRNA(Asn) or Gln-tRNA(Gln) through the transamidation of misacylated Asp-tRNA(Asn) or Glu-tRNA(Gln) in organisms which lack either or both of asparaginyl-tRNA or glutaminyl-tRNA synthetases. The reaction takes place in the presence of glutamine and ATP through an activated phospho-Asp-tRNA(Asn) or phospho-Glu-tRNA(Gln). The polypeptide is Aspartyl/glutamyl-tRNA(Asn/Gln) amidotransferase subunit B (Wolbachia pipientis wMel).